We begin with the raw amino-acid sequence, 750 residues long: MARTLYDKVLEDHIIDRQEYGTCLIYIDRHLVHEVTSPQAFEGLRNAGRPVRRPDCTLATVDHNIPTSPRRNFKDIATFIKEGDSSTQCETLGENIEAFGLTYFGMEDSRQGIVHVIGPEQGFTLPGTTVVCGDSHTSTHGAFGALAFGIGTSEVEHVLATQTLLQKKSKNMRIRVEGKPSAGVTSKDIALHVIGVIGTAGGTGCVIEFCGEANESLSMESRMSICNMSIEAGARAGMIAPDDITFEYLCNKPLASKGEEWDRAVAYWKTLKFDADAQYDITVDIKASDIAPTVTWGTSPQDVAPITGKTPDLDSIADPLRRLAVQRALDYIGIASNTPLEGVKIDKVFIGSCTNSRIEDLGPAAAIVKGKRVADWVDAMVVPGSALVKRQAERKGLDKIFQEAGFNWREAGCSMCLGMNPDQLKPGERCASTSNRNFKGRQGAGGRTHLLSPAMAAAAGIKGCLTDVRHMEVAGIALTGNESPRQEVVASKYDGSPEVFKSTQDTTPAVKPPQPASDSSSSGGMPAFTTLKGYAAPLDISNIDTDMIIPKQFLKTIKRTGLGSALFYSLRFDPQTGAENPAFVLKERTFRQARILVCTGPNFGCGSSREHAPWAFNDFGIRCILAPSFADIFFNNCFKNGMLPIVLPQAQLEAIAAEAQKGVEVEVDLVQQIVRNPGGEVSFDVEEFRKHCLVNGLDDIGLTMQKADKIAQFETKRTQTWPWLDGKGYKGKATKIEINGGQQKKAKLDW.

The [4Fe-4S] cluster site is built by cysteine 353, cysteine 413, and cysteine 416. The interval 492–524 is disordered; sequence KYDGSPEVFKSTQDTTPAVKPPQPASDSSSSGG.

The protein belongs to the aconitase/IPM isomerase family. In terms of assembly, monomer. It depends on [4Fe-4S] cluster as a cofactor.

The catalysed reaction is (2R,3S)-3-isopropylmalate = (2S)-2-isopropylmalate. It participates in amino-acid biosynthesis; L-leucine biosynthesis; L-leucine from 3-methyl-2-oxobutanoate: step 2/4. Its function is as follows. Catalyzes the isomerization between 2-isopropylmalate and 3-isopropylmalate, via the formation of 2-isopropylmaleate. The polypeptide is 3-isopropylmalate dehydratase (LEU1) (Rhizopus niveus).